The primary structure comprises 476 residues: Transcription factor EB (476 aa).

Disordered stretches follow at residues 1 to 66 (MASR…PPVP) and 107 to 142 (HISPAQGSPKPPPAASPGVRAGHVLSSSAGNSAPNS). Residues 1–167 (MASRIGLRMQ…DDVIDNIMRL (167 aa)) are interaction with ACSS2. Residues 26 to 44 (QQQAVMHYMQQQQQQQQQQ) are compositionally biased toward low complexity. A phosphoserine mark is found at Ser-109, Ser-114, Ser-122, and Ser-138. Low complexity predominate over residues 132–142 (SSSAGNSAPNS). The Nuclear export signal signature appears at 136–153 (GNSAPNSPMAMLHIGSNP). A Phosphoserine; by MTOR modification is found at Ser-142. The strong transcription activation domain stretch occupies residues 156–165 (ELDDVIDNIM). Thr-183 carries the phosphothreonine modification. Residue Ser-211 is modified to Phosphoserine; by MTOR. Cys-212 carries the post-translational modification S-(2,3-dicarboxypropyl)cysteine. One can recognise a bHLH domain in the interval 235–288 (QKKDNHNLIERRRRFNINDRIKELGMLIPKANDLDVRWNKGTILKASVDYIRRM). A Nuclear localization signal motif is present at residues 245 to 248 (RRRR). Residues 298-319 (LENHSRRLEMTNKQLWLRIQEL) form a leucine-zipper region. Ser-332 is subject to Phosphoserine. The tract at residues 349 to 430 (ELPSEEGPGE…HGSPFPSLSK (82 aa)) is disordered. Positions 369-390 (PEPLPALPPQAPLPLPTQPPSP) are enriched in pro residues. Phosphoserine is present on residues Ser-423, Ser-441, Ser-466, Ser-467, and Ser-469. Positions 447-469 (SDPLLSTMSPEASKASSRRSSFS) are enriched in low complexity. A disordered region spans residues 447-476 (SDPLLSTMSPEASKASSRRSSFSMEEGDVL).

The protein belongs to the MiT/TFE family. In terms of assembly, homodimer and heterodimer; with TFE3 or MITF. Interacts (when phosphorylated by MTOR) with YWHAZ; promoting retention in the cytosol. Interacts with IRGM; promoting association between TFEB and PPP3CB and dephosphorylation. Interacts with small GTPases Rag (RagA/RRAGA, RagB/RRAGB, RagC/RRAGC and/or RagD/RRAGD); promoting its recruitment to lysosomal membrane in the presence of nutrients. Interacts with ACSS2. In terms of processing, phosphorylation at Ser-211 by MTOR via non-canonical mTORC1 pathway regulates its subcellular location and activity. When nutrients are present, phosphorylation by MTOR promotes association with 14-3-3/YWHA adapters and retention in the cytosol. Inhibition of mTORC1, starvation and lysosomal disruption, promotes dephosphorylation by calcineurin PPP3CB and translocation to the nucleus. Dephosphorylated by calcineurin PPP3CB in response to lysosomal Ca(2+) release. IRGM promotes dephosphorylation by calcineurin PPP3CB, resulting in TFEB nuclear translocation and stimulation of lysosomal biogenesis. Dephosphorylated by phosphatase PPP3CA following Coxsackievirus B3 infection, leading to nuclear translocation. Exported from the nucleus in a mTORC1-dependent manner in response to nutrient availability. Alkylated via a non-enzymatic covalent modification. Itaconate, an anti-inflammatory metabolite generated in response to lipopolysaccharide, alkylates Cys-212, preventing association with 14-3-3/YWHA adapters, thereby promoting nuclear translocation and activity. Post-translationally, sumoylated; does not affect dimerization with MITF. In terms of processing, (Microbial infection) Cleavage by Coxsackievirus B3 protease 3C after site Gln-60. This non-phosphorylated cleavage product retains its ability to interact with TFEB, TFE3 or MITF and presents impaired transcriptional activity, resulting in disruption of lysosomal functions and increased viral infection.

It localises to the nucleus. The protein resides in the cytoplasm. Its subcellular location is the cytosol. The protein localises to the lysosome membrane. With respect to regulation, inhibited by eltrombopag drug, which binds to the bHLH domain and disrupts DNA-binding. Its function is as follows. Transcription factor that acts as a master regulator of lysosomal biogenesis, autophagy, lysosomal exocytosis, lipid catabolism, energy metabolism and immune response. Specifically recognizes and binds E-box sequences (5'-CANNTG-3'); efficient DNA-binding requires dimerization with itself or with another MiT/TFE family member such as TFE3 or MITF. Involved in the cellular response to amino acid availability by acting downstream of MTOR: in the presence of nutrients, TFEB phosphorylation by MTOR promotes its cytosolic retention and subsequent inactivation. Upon starvation or lysosomal stress, inhibition of MTOR induces TFEB dephosphorylation, resulting in nuclear localization and transcription factor activity. Specifically recognizes and binds the CLEAR-box sequence (5'-GTCACGTGAC-3') present in the regulatory region of many lysosomal genes, leading to activate their expression, thereby playing a central role in expression of lysosomal genes. Regulates lysosomal positioning in response to nutrient deprivation by promoting the expression of PIP4P1. Acts as a positive regulator of autophagy by promoting expression of genes involved in autophagy. In association with TFE3, activates the expression of CD40L in T-cells, thereby playing a role in T-cell-dependent antibody responses in activated CD4(+) T-cells and thymus-dependent humoral immunity. Specifically recognizes the gamma-E3 box, a subset of E-boxes, present in the heavy-chain immunoglobulin enhancer. Plays a role in the signal transduction processes required for normal vascularization of the placenta. Involved in the immune response to infection by the bacteria S.aureus, S.typhimurium or S.enterica: infection promotes itaconate production, leading to alkylation, resulting in nuclear localization and transcription factor activity. Itaconate-mediated alkylation activates TFEB-dependent lysosomal biogenesis, facilitating the bacteria clearance during the antibacterial innate immune response. In association with ACSS2, promotes the expression of genes involved in lysosome biogenesis and both autophagy upon glucose deprivation. The sequence is that of Transcription factor EB from Homo sapiens (Human).